The sequence spans 512 residues: tRNA-guanine(15) transglycosylase (512 aa).

Aspartate 85 acts as the Nucleophile in catalysis. Aspartate 120 serves as a coordination point for substrate. Positions 272, 274, and 277 each coordinate Zn(2+).

Belongs to the archaeosine tRNA-ribosyltransferase family. Zn(2+) is required as a cofactor.

It catalyses the reaction guanosine(15) in tRNA + 7-cyano-7-deazaguanine = 7-cyano-7-carbaguanosine(15) in tRNA + guanine. It functions in the pathway tRNA modification; archaeosine-tRNA biosynthesis. Functionally, exchanges the guanine residue with 7-cyano-7-deazaguanine (preQ0) at position 15 in the dihydrouridine loop (D-loop) of archaeal tRNAs. The chain is tRNA-guanine(15) transglycosylase from Aeropyrum pernix (strain ATCC 700893 / DSM 11879 / JCM 9820 / NBRC 100138 / K1).